Consider the following 407-residue polypeptide: Probable peptidoglycan glycosyltransferase FtsW (407 aa).

Residues 1 to 25 lie on the Cytoplasmic side of the membrane; it reads MSIDFRNIIKPYPSPIITGRGIDLD. A helical membrane pass occupies residues 26-46; the sequence is FPMLAGCLALLGLGLVMITSA. Residues 47 to 65 are Periplasmic-facing; sequence SSEVAAVQSGNTLYMMIRH. The chain crosses the membrane as a helical span at residues 66–86; sequence LVYLVIGLGACIVTMMIPIAT. Over 87–89 the chain is Cytoplasmic; that stretch reads WQR. Residues 90 to 110 form a helical membrane-spanning segment; it reads LGWLMLIGAFGLLIMVILPGI. At 111–119 the chain is on the periplasmic side; it reads GREVNGSMR. A helical transmembrane segment spans residues 120–140; sequence WIGFGAFNVQPSEIAKVFVVI. Topologically, residues 141-155 are cytoplasmic; it reads YLAGYLVRRQKEVRE. A helical transmembrane segment spans residues 156 to 176; sequence SWMGFFKPFIVLLPMAGLLLM. The Periplasmic segment spans residues 177-181; it reads EPDFG. A helical transmembrane segment spans residues 182–202; it reads ATVVMMGAAAAMLFLGGVGLF. A topological domain (cytoplasmic) is located at residue Arg-203. Residues 204–224 form a helical membrane-spanning segment; the sequence is FTLMVVLAVAAVTVLVQAQPY. Over 225–283 the chain is Periplasmic; the sequence is RMARLITFTDPWSDQFGSGYQLTQALIAFGRGEWLGVGLGNSVQKQFYLPEAHTDFVFS. The chain crosses the membrane as a helical span at residues 284 to 304; that stretch reads VLAEELGVVGSLCTVALFVFV. The Cytoplasmic segment spans residues 305 to 321; sequence CVRGMYIGMWAEKAKQY. A helical membrane pass occupies residues 322–342; it reads FAAYVAYGLSFLWIGQFLINI. Residues 343–355 lie on the Periplasmic side of the membrane; the sequence is GVNVGLLPTKGLT. Residues 356-376 form a helical membrane-spanning segment; sequence LPFLSYGGSSLVICCACLGLL. Over 377–407 the chain is Cytoplasmic; the sequence is LRIEWESRTHLGSEEMEFSESDFAEEPTHGR.

This sequence belongs to the SEDS family. FtsW subfamily.

It localises to the cell inner membrane. It carries out the reaction [GlcNAc-(1-&gt;4)-Mur2Ac(oyl-L-Ala-gamma-D-Glu-L-Lys-D-Ala-D-Ala)](n)-di-trans,octa-cis-undecaprenyl diphosphate + beta-D-GlcNAc-(1-&gt;4)-Mur2Ac(oyl-L-Ala-gamma-D-Glu-L-Lys-D-Ala-D-Ala)-di-trans,octa-cis-undecaprenyl diphosphate = [GlcNAc-(1-&gt;4)-Mur2Ac(oyl-L-Ala-gamma-D-Glu-L-Lys-D-Ala-D-Ala)](n+1)-di-trans,octa-cis-undecaprenyl diphosphate + di-trans,octa-cis-undecaprenyl diphosphate + H(+). It functions in the pathway cell wall biogenesis; peptidoglycan biosynthesis. Its function is as follows. Peptidoglycan polymerase that is essential for cell division. In Pseudomonas fluorescens (strain SBW25), this protein is Probable peptidoglycan glycosyltransferase FtsW.